A 334-amino-acid chain; its full sequence is DNA-directed RNA polymerase subunit alpha (334 aa).

Positions 1 to 233 (MADQTISNVL…NLFTPLVSQE (233 aa)) are alpha N-terminal domain (alpha-NTD). The interval 263–334 (DNENSYNLYN…QLKKRFKIQL (72 aa)) is alpha C-terminal domain (alpha-CTD).

Belongs to the RNA polymerase alpha chain family. In terms of assembly, in plastids the minimal PEP RNA polymerase catalytic core is composed of four subunits: alpha, beta, beta', and beta''. When a (nuclear-encoded) sigma factor is associated with the core the holoenzyme is formed, which can initiate transcription.

The protein resides in the plastid. Its subcellular location is the chloroplast. The catalysed reaction is RNA(n) + a ribonucleoside 5'-triphosphate = RNA(n+1) + diphosphate. Its function is as follows. DNA-dependent RNA polymerase catalyzes the transcription of DNA into RNA using the four ribonucleoside triphosphates as substrates. This Chaetosphaeridium globosum (Charophycean green alga) protein is DNA-directed RNA polymerase subunit alpha.